Here is a 511-residue protein sequence, read N- to C-terminus: Histidine ammonia-lyase (511 aa).

Residues 143–145 (ASG) constitute a cross-link (5-imidazolinone (Ala-Gly)). S144 carries the post-translational modification 2,3-didehydroalanine (Ser).

It belongs to the PAL/histidase family. In terms of processing, contains an active site 4-methylidene-imidazol-5-one (MIO), which is formed autocatalytically by cyclization and dehydration of residues Ala-Ser-Gly.

The protein resides in the cytoplasm. The catalysed reaction is L-histidine = trans-urocanate + NH4(+). It functions in the pathway amino-acid degradation; L-histidine degradation into L-glutamate; N-formimidoyl-L-glutamate from L-histidine: step 1/3. The chain is Histidine ammonia-lyase from Vibrio parahaemolyticus serotype O3:K6 (strain RIMD 2210633).